Reading from the N-terminus, the 238-residue chain is ATP synthase subunit a (238 aa).

The next 5 helical transmembrane spans lie at 18-38 (LTLL…VFWA), 76-96 (YSLL…LGLF), 114-134 (NLAF…IEGV), 166-186 (SLAI…GLIV), and 193-213 (VYWW…SVFI).

It belongs to the ATPase A chain family. In terms of assembly, F-type ATPases have 2 components, CF(1) - the catalytic core - and CF(0) - the membrane proton channel. CF(1) has five subunits: alpha(3), beta(3), gamma(1), delta(1), epsilon(1). CF(0) has three main subunits: a(1), b(2) and c(9-12). The alpha and beta chains form an alternating ring which encloses part of the gamma chain. CF(1) is attached to CF(0) by a central stalk formed by the gamma and epsilon chains, while a peripheral stalk is formed by the delta and b chains.

Its subcellular location is the cell membrane. Its function is as follows. Key component of the proton channel; it plays a direct role in the translocation of protons across the membrane. The protein is ATP synthase subunit a of Streptococcus pyogenes serotype M1.